We begin with the raw amino-acid sequence, 104 residues long: Large ribosomal subunit protein bL28 (104 aa).

Belongs to the bacterial ribosomal protein bL28 family.

The sequence is that of Large ribosomal subunit protein bL28 from Wolbachia pipientis wMel.